A 513-amino-acid chain; its full sequence is Maturase K (513 aa).

This sequence belongs to the intron maturase 2 family. MatK subfamily.

The protein localises to the plastid. It localises to the chloroplast. Usually encoded in the trnK tRNA gene intron. Probably assists in splicing its own and other chloroplast group II introns. This chain is Maturase K, found in Danthonia spicata (Poverty oatgrass).